Reading from the N-terminus, the 479-residue chain is uncharacterized protein (479 aa).

The segment at 180–203 (LGGEHSDSTNTELANPSSTTTRIT) is disordered. The segment covering 187-202 (STNTELANPSSTTTRI) has biased composition (polar residues). The PE-PPE domain occupies 240–462 (PGTTPEVVSY…LKPLVDAGYS (223 aa)).

Belongs to the mycobacterial PPE family.

This is an uncharacterized protein from Mycobacterium tuberculosis (strain CDC 1551 / Oshkosh).